The primary structure comprises 597 residues: MDKSKIRNFSIIAHIDHGKSTLADRILELTNTVAARDLEEQFLDQMDLERERGITIKLNAVQIKYKDYTFHLIDTPGHVDFTYEVSRSLAASEGALLLVDATQGIEAQTLANVYLALENNLEIIPIINKIDLPSANVEKTKEEIENVIGIPADNAVCVSAKTGLNCEKVLDAIVDYVPAPKDADDNKPLKALIFDSYFDEYRGVIMLIRVFQGKLKVGDDFKFMSNNANYHVIELGVRNPKETKKEYLEAGEVGYVAATIRDAKEVHVGDTITLVENPALEPLPGYKRKKPVLFTGFYPIDTRDYAELKKSLDKISLSDSSLTWEQETSKALGFGFRVGFLGMLHMDVIQERLSREYKVGIIATSPSVEYKVVKTNGTFEMISNPSLMPDRTYIDHIEEPYIEATIILPNEYIGNIMDLCQNKRGIYKSLDYIDDSRSRLIYEMPLGEIVFDFFDKMKSLSKGYASFEYDLIGYKTSDLVKVDILLNGDKIDAFSIITHKDSAYEKSRDLTKRLKDAIPRQNFEVPVQATIGGKIIARETIKAFRKDVTHKLHASDISRYKKLLEKQKAGKKKMKMLGSVEVPQEAFLDILKTNVDK.

Residues 4–181 form the tr-type G domain; sequence SKIRNFSIIA…AIVDYVPAPK (178 aa). Residues 16-21 and 128-131 each bind GTP; these read DHGKST and NKID.

It belongs to the TRAFAC class translation factor GTPase superfamily. Classic translation factor GTPase family. LepA subfamily.

It is found in the cell membrane. It carries out the reaction GTP + H2O = GDP + phosphate + H(+). Required for accurate and efficient protein synthesis under certain stress conditions. May act as a fidelity factor of the translation reaction, by catalyzing a one-codon backward translocation of tRNAs on improperly translocated ribosomes. Back-translocation proceeds from a post-translocation (POST) complex to a pre-translocation (PRE) complex, thus giving elongation factor G a second chance to translocate the tRNAs correctly. Binds to ribosomes in a GTP-dependent manner. The polypeptide is Elongation factor 4 (Mycoplasmopsis agalactiae (strain NCTC 10123 / CIP 59.7 / PG2) (Mycoplasma agalactiae)).